The sequence spans 339 residues: MSAPINGTVEKSYVPGAELWCQEDETAITEPYTYVNSMPGKDVRGRFIEAANHWLHVEPEPLAVICKIVAMLHNASLVIDDIEDNSQLRRGQPVAHKIYGLAQAINSANYVYFLALKEADQLKPYQREGYNSHEIILGALTSVSDFAAQDLLYSVFSDELVNLHRGQGLELVWRDSLRCPTEEQYIDMVNKKTGGLFRLAIKLLTACSSNPSTIDYVPLFNLFGVFFQIRDDLMNLDDNEYEKNKGFAEDLTEGKFSFPVIHGITAQKDNSVLINVLQKRPTTPPLKLHAIHHLRNNTGSFKYTETILNSLETRLRGEIDALGGNPGLLKLVDLLSVRK.

Isopentenyl diphosphate-binding residues include K41, R44, and H73. Residues D80 and D84 each contribute to the Mg(2+) site. Residue R89 coordinates dimethylallyl diphosphate. R90 lines the isopentenyl diphosphate pocket. Positions 192, 193, and 228 each coordinate dimethylallyl diphosphate. Mg(2+) is bound at residue D231. Positions 235, 245, and 255 each coordinate dimethylallyl diphosphate.

This sequence belongs to the FPP/GGPP synthase family. The cofactor is Mg(2+).

It carries out the reaction isopentenyl diphosphate + dimethylallyl diphosphate = (2E)-geranyl diphosphate + diphosphate. The enzyme catalyses isopentenyl diphosphate + (2E)-geranyl diphosphate = (2E,6E)-farnesyl diphosphate + diphosphate. The catalysed reaction is isopentenyl diphosphate + (2E,6E)-farnesyl diphosphate = (2E,6E,10E)-geranylgeranyl diphosphate + diphosphate. It functions in the pathway secondary metabolite biosynthesis. Functionally, geranylgeranyl pyrophosphate synthase; part of the gene cluster that mediates the biosynthesis of erinacines, cyathane-xylosides that show unique biological activities, including leishmanicidal activity, stimulating activity for nerve growth-factor synthesis, and agonistic activity toward the kappa opioid receptor. The geranylgeranyl diphosphate (GGPP) synthase eriE catalyzes the first step in erinacines biosynthesis via conversion of farnesyl pyrophosphate and isopentyl pyrophosphate into geranylgeranyl pyrophosphate (GGPP). GGPP is then substrate of the diterpene cyclase eriG for the production of cyatha-3,12-diene. The cytochrome P450 monooxygenase eriI then hydroxylates cyatha-3,12-diene at C-14 of the seven-membered ring to produce erinacol, which is further hydroxylated at C-15 by the cytochrome P450 monooxygenase eriC to yield cyathadiol. The cytochrome P450 monooxygenase eriA then catalyzes C-11 hydroxylation in the presence of the short chain dehydrogenase/reductase (SDR) eriH, which leads to the production of cyathatriol. The acetyltransferase eriL converts cyathatriol into 11-O-acetyl-cyathatriol. The SDR eriH catalyzes further oxidation of 11-O-acetyl-cyathatriol into 1-O-acetylcyathin A3. Finally, the glycosyl transferase eriJ tranfers xylose from UDP-xylose onto C-14 of 11-O-acetyl-cyathatriol to form eracine Q. EriJ is also able to convert 11-O-acetyl-cyathatriol to eracine Q2 by using UDP-D-glucose as cosubstrate, but at a lower rate. In the absence of eriL and eriJ, the SDR eriH is able to convert cyathatriol to cyathin A3; this is likely a switching mechanism in the biosynthesis of cyathins (C-14 ketogroup)and erinacines (C-14 glycosylated group). The roles of the SDR eriB, the polyprenyl transferase eriF and the dehydrogenase eriK have still to be identified. This is Geranylgeranyl pyrophosphate synthase AN1592 from Hericium erinaceus (Lion's mane mushroom).